Here is a 211-residue protein sequence, read N- to C-terminus: Pyridoxine/pyridoxamine 5'-phosphate oxidase (211 aa).

Residues Arg-7 to Tyr-10 and Lys-65 contribute to the substrate site. FMN contacts are provided by residues Arg-60–Lys-65, Tyr-75–Thr-76, Arg-81, Lys-82, and Gln-104. Tyr-122, Arg-126, and Ser-130 together coordinate substrate. Residues Gln-139–Ser-140 and Trp-184 each bind FMN. A substrate-binding site is contributed by Arg-190–His-192. Residue Arg-194 participates in FMN binding.

This sequence belongs to the pyridoxamine 5'-phosphate oxidase family. As to quaternary structure, homodimer. Requires FMN as cofactor.

The enzyme catalyses pyridoxamine 5'-phosphate + O2 + H2O = pyridoxal 5'-phosphate + H2O2 + NH4(+). The catalysed reaction is pyridoxine 5'-phosphate + O2 = pyridoxal 5'-phosphate + H2O2. It functions in the pathway cofactor metabolism; pyridoxal 5'-phosphate salvage; pyridoxal 5'-phosphate from pyridoxamine 5'-phosphate: step 1/1. The protein operates within cofactor metabolism; pyridoxal 5'-phosphate salvage; pyridoxal 5'-phosphate from pyridoxine 5'-phosphate: step 1/1. Functionally, catalyzes the oxidation of either pyridoxine 5'-phosphate (PNP) or pyridoxamine 5'-phosphate (PMP) into pyridoxal 5'-phosphate (PLP). In Aliivibrio fischeri (strain ATCC 700601 / ES114) (Vibrio fischeri), this protein is Pyridoxine/pyridoxamine 5'-phosphate oxidase.